Here is a 261-residue protein sequence, read N- to C-terminus: 5'-nucleotidase SurE (261 aa).

Positions 17, 18, 48, and 104 each coordinate a divalent metal cation.

The protein belongs to the SurE nucleotidase family. It depends on a divalent metal cation as a cofactor.

It localises to the cytoplasm. It catalyses the reaction a ribonucleoside 5'-phosphate + H2O = a ribonucleoside + phosphate. In terms of biological role, nucleotidase that shows phosphatase activity on nucleoside 5'-monophosphates. This Deinococcus geothermalis (strain DSM 11300 / CIP 105573 / AG-3a) protein is 5'-nucleotidase SurE.